We begin with the raw amino-acid sequence, 127 residues long: Large ribosomal subunit protein uL22 (127 aa).

This sequence belongs to the universal ribosomal protein uL22 family. In terms of assembly, part of the 50S ribosomal subunit.

Functionally, this protein binds specifically to 23S rRNA; its binding is stimulated by other ribosomal proteins, e.g. L4, L17, and L20. It is important during the early stages of 50S assembly. It makes multiple contacts with different domains of the 23S rRNA in the assembled 50S subunit and ribosome. The globular domain of the protein is located near the polypeptide exit tunnel on the outside of the subunit, while an extended beta-hairpin is found that lines the wall of the exit tunnel in the center of the 70S ribosome. This Methylobacterium nodulans (strain LMG 21967 / CNCM I-2342 / ORS 2060) protein is Large ribosomal subunit protein uL22.